A 172-amino-acid polypeptide reads, in one-letter code: MSSKRAKAKTTKKRPQRATSNVFAMFDQSQIQEFKEAFNMIDQNRDGFIDKEDLHDMLASLGKNPTDEYLEGMMSEAPGPINFTMFLTMFGEKLNGTDPEDVIRNAFACFDEEASGFIHEDHLRELLTTMGDRFTDEEVDEMYREAPIDKKGNFNYVEFTRILKHGAKDKDD.

A compositionally biased stretch (basic residues) spans 1–16 (MSSKRAKAKTTKKRPQ). Residues 1–20 (MSSKRAKAKTTKKRPQRATS) form a disordered region. Ser2 is subject to N-acetylserine. Residue Thr19 is modified to Phosphothreonine; by MLCK, CIT and ROCK2. A Phosphoserine; by CDC42BP, CIT, MLCK, PAK1, ROCK1, ROCK2, DAPK1, DAPK2 and ZIPK/DAPK3 modification is found at Ser20. 3 EF-hand domains span residues 29 to 64 (SQIQEFKEAFNMIDQNRDGFIDKEDLHDMLASLGKN), 98 to 133 (DPEDVIRNAFACFDEEASGFIHEDHLRELLTTMGDR), and 134 to 169 (FTDEEVDEMYREAPIDKKGNFNYVEFTRILKHGAKD). Ca(2+) contacts are provided by Asp42, Asn44, Asp46, and Asp53.

As to quaternary structure, myosin is a hexamer of 2 heavy chains and 4 light chains: interacts with myosin heavy chain MYO19. Interacts with LUZP1; the interaction results in inhibition of phosphorylation of MYL9 by DAPK3. In terms of processing, phosphorylation increases the actin-activated myosin ATPase activity and thereby regulates the contractile activity. It is required to generate the driving force in the migration of the cells but not necessary for localization of myosin-2 at the leading edge. Phosphorylation is required for myotube formation. Phosphorylated by DAPK3; DAPK3-mediated phosphorylation is inhibited by LUZP1. Smooth muscle tissues and in some, but not all, nonmuscle cells.

It is found in the cytoplasm. It localises to the cytoskeleton. The protein localises to the cell cortex. Its function is as follows. Myosin regulatory subunit that plays an important role in regulation of both smooth muscle and nonmuscle cell contractile activity via its phosphorylation. Implicated in cytokinesis, receptor capping, and cell locomotion. In myoblasts, may regulate PIEZO1-dependent cortical actomyosin assembly involved in myotube formation. This Homo sapiens (Human) protein is Myosin regulatory light polypeptide 9 (MYL9).